The following is a 260-amino-acid chain: Pyridoxine 5'-phosphate synthase (260 aa).

Position 15 (N15) interacts with 3-amino-2-oxopropyl phosphate. D17 to H18 is a 1-deoxy-D-xylulose 5-phosphate binding site. R26 contacts 3-amino-2-oxopropyl phosphate. The active-site Proton acceptor is the H51. Residues R53 and H58 each contribute to the 1-deoxy-D-xylulose 5-phosphate site. The Proton acceptor role is filled by E78. T108 lines the 1-deoxy-D-xylulose 5-phosphate pocket. H199 (proton donor) is an active-site residue. Residues G200 and G221 to H222 each bind 3-amino-2-oxopropyl phosphate.

This sequence belongs to the PNP synthase family. As to quaternary structure, homooctamer; tetramer of dimers.

The protein resides in the cytoplasm. It carries out the reaction 3-amino-2-oxopropyl phosphate + 1-deoxy-D-xylulose 5-phosphate = pyridoxine 5'-phosphate + phosphate + 2 H2O + H(+). It functions in the pathway cofactor biosynthesis; pyridoxine 5'-phosphate biosynthesis; pyridoxine 5'-phosphate from D-erythrose 4-phosphate: step 5/5. Its function is as follows. Catalyzes the complicated ring closure reaction between the two acyclic compounds 1-deoxy-D-xylulose-5-phosphate (DXP) and 3-amino-2-oxopropyl phosphate (1-amino-acetone-3-phosphate or AAP) to form pyridoxine 5'-phosphate (PNP) and inorganic phosphate. The polypeptide is Pyridoxine 5'-phosphate synthase (Cupriavidus taiwanensis (strain DSM 17343 / BCRC 17206 / CCUG 44338 / CIP 107171 / LMG 19424 / R1) (Ralstonia taiwanensis (strain LMG 19424))).